Consider the following 422-residue polypeptide: L-threonine dehydratase biosynthetic IlvA (422 aa).

Lys60 is modified (N6-(pyridoxal phosphate)lysine). Pyridoxal 5'-phosphate is bound by residues Asn87, 190 to 194 (GGGGL), and Ser315. One can recognise an ACT-like domain in the interval 339–413 (HYFIVNFPQR…KPFHYVEVNK (75 aa)).

Belongs to the serine/threonine dehydratase family. In terms of assembly, homotetramer. It depends on pyridoxal 5'-phosphate as a cofactor.

The enzyme catalyses L-threonine = 2-oxobutanoate + NH4(+). The protein operates within amino-acid biosynthesis; L-isoleucine biosynthesis; 2-oxobutanoate from L-threonine: step 1/1. In terms of biological role, catalyzes the anaerobic formation of alpha-ketobutyrate and ammonia from threonine in a two-step reaction. The first step involved a dehydration of threonine and a production of enamine intermediates (aminocrotonate), which tautomerizes to its imine form (iminobutyrate). Both intermediates are unstable and short-lived. The second step is the nonenzymatic hydrolysis of the enamine/imine intermediates to form 2-ketobutyrate and free ammonia. In the low water environment of the cell, the second step is accelerated by RidA. This is L-threonine dehydratase biosynthetic IlvA (ilvA) from Bacillus subtilis (strain 168).